Consider the following 348-residue polypeptide: tRNA-specific 2-thiouridylase MnmA (348 aa).

ATP is bound by residues 8-15 (LLSGGVDS) and M34. C105 (nucleophile) is an active-site residue. C105 and C197 are disulfide-bonded. G129 is a binding site for ATP. The segment at 147–149 (KDQ) is interaction with tRNA. C197 (cysteine persulfide intermediate) is an active-site residue.

This sequence belongs to the MnmA/TRMU family.

It is found in the cytoplasm. The catalysed reaction is S-sulfanyl-L-cysteinyl-[protein] + uridine(34) in tRNA + AH2 + ATP = 2-thiouridine(34) in tRNA + L-cysteinyl-[protein] + A + AMP + diphosphate + H(+). Its function is as follows. Catalyzes the 2-thiolation of uridine at the wobble position (U34) of tRNA, leading to the formation of s(2)U34. The sequence is that of tRNA-specific 2-thiouridylase MnmA from Fervidobacterium nodosum (strain ATCC 35602 / DSM 5306 / Rt17-B1).